The primary structure comprises 547 residues: Kelch repeat and BTB domain-containing protein 2 (547 aa).

The region spanning 20 to 89 (CDVIITIGDG…LYNRHISSMN (70 aa)) is the BTB domain. Kelch repeat units follow at residues 295-342 (DIII…VIDD), 343-389 (TIYA…VLDQ), and 391-454 (IYII…SHKD).

In terms of assembly, interacts (via BTB domain) with host CUL3.

The protein resides in the host cytoplasm. Functionally, probable substrate-specific adapter of CUL3-containing E3 ubiquitin-protein ligases which mediate the ubiquitination and subsequent proteasomal degradation of host target proteins. The chain is Kelch repeat and BTB domain-containing protein 2 (KBTB2) from Bos taurus (Bovine).